Reading from the N-terminus, the 1280-residue chain is Clustered mitochondria protein homolog (1280 aa).

Polar residues predominate over residues 1–27; the sequence is MAASSNDASKSAMANSNVTTEVAQTPS. 2 disordered regions span residues 1-49 and 169-189; these read MAAS…GQLP and GLDQSGKPKEDGPEQSPLADY. Over residues 32 to 43 the composition is skewed to acidic residues; that stretch reads VNGEVEATEEDG. Residues 338–582 form the Clu domain; that stretch reads DLARTQESYL…RLTPLDVAWI (245 aa). Disordered regions lie at residues 633-669, 905-943, and 1214-1280; these read KANKARGGRRRLPKAQKKADAGKEVDGEKKAEAEPEQ, GAAVPTPAAPQTNGSSTSSKKKKNKTITPPRADSPAVSL, and TGRN…TQKP. Residues 635–648 show a composition bias toward basic residues; that stretch reads NKARGGRRRLPKAQ. A compositionally biased stretch (basic and acidic residues) spans 649 to 669; the sequence is KKADAGKEVDGEKKAEAEPEQ. The segment covering 1221–1235 has biased composition (low complexity); that stretch reads PAAATPSVSDAAAAA. Positions 1245 to 1261 are enriched in basic and acidic residues; that stretch reads VDQRKIEDLLKYIEGES. Positions 1265–1280 are enriched in basic residues; that stretch reads PTKKRTQNPRKRTQKP.

The protein belongs to the CLU family. In terms of assembly, may associate with the eukaryotic translation initiation factor 3 (eIF-3) complex.

The protein localises to the cytoplasm. In terms of biological role, mRNA-binding protein involved in proper cytoplasmic distribution of mitochondria. The protein is Clustered mitochondria protein homolog of Phaeosphaeria nodorum (strain SN15 / ATCC MYA-4574 / FGSC 10173) (Glume blotch fungus).